The following is a 314-amino-acid chain: Lysophospholipase D GDPD1 (314 aa).

The Extracellular portion of the chain corresponds to 1–3 (MSS). Residues 4–24 (TAAFYLLSTLGGYLVTSFLLL) form a helical membrane-spanning segment. Topologically, residues 25–195 (KYPTLLHQRK…VEKCYKENSD (171 aa)) are cytoplasmic. Positions 40-309 (SKHISHRGGA…DYPTKLRDFL (270 aa)) constitute a GP-PDE domain. A divalent metal cation is bound by residues Glu-72, Asp-74, and His-87. Residues 196-216 (IPILFSLQRVLLILGLFFTGL) traverse the membrane as a helical segment. The Extracellular segment spans residues 217-314 (LPFVPIREQF…LRDFLHNFSA (98 aa)).

It belongs to the glycerophosphoryl diester phosphodiesterase family. In terms of tissue distribution, widely expressed with high expression level in testis.

Its subcellular location is the cytoplasm. The protein localises to the membrane. It is found in the perinuclear region. The protein resides in the endoplasmic reticulum. The catalysed reaction is a 1-O-alkyl-sn-glycero-3-phosphocholine + H2O = a 1-O-alkyl-sn-glycero-3-phosphate + choline + H(+). It carries out the reaction 1-hexadecanoyl-sn-glycero-3-phosphocholine + H2O = 1-hexadecanoyl-sn-glycero-3-phosphate + choline + H(+). The enzyme catalyses N-hexadecanoyl-sn-glycero-3-phosphoethanolamine + H2O = N-hexadecanoylethanolamine + sn-glycerol 3-phosphate + H(+). It catalyses the reaction N-(5Z,8Z,11Z,14Z-eicosatetraenoyl)-1-(9Z-octadecenoyl)-sn-glycero-3-phosphoethanolamine + H2O = N-(5Z,8Z,11Z,14Z-eicosatetraenoyl)-ethanolamine + 1-(9Z-octadecenoyl)-sn-glycero-3-phosphate + H(+). The catalysed reaction is N,1-di-(9Z-octadecenoyl)-sn-glycero-3-phosphoethanolamine + H2O = N-(9Z-octadecenoyl) ethanolamine + 1-(9Z-octadecenoyl)-sn-glycero-3-phosphate + H(+). It carries out the reaction N-hexadecanoyl-1-(9Z-octadecenoyl)-sn-glycero-3-phosphoethanolamine + H2O = N-hexadecanoylethanolamine + 1-(9Z-octadecenoyl)-sn-glycero-3-phosphate + H(+). The enzyme catalyses 1-O-(1Z-octadecenyl)-sn-glycero-3-phospho-N-hexadecanoyl-ethanolamine + H2O = 1-O-(1Z-octadecenyl)-sn-glycero-3-phosphate + N-hexadecanoylethanolamine + H(+). It catalyses the reaction 1-hexadecanoyl-sn-glycero-3-phosphoethanolamine + H2O = 1-hexadecanoyl-sn-glycero-3-phosphate + ethanolamine + H(+). The catalysed reaction is 1-O-hexadecyl-sn-glycero-3-phosphocholine + H2O = 1-O-hexadecyl-sn-glycero-3-phosphate + choline + H(+). It carries out the reaction 1-(9Z-octadecenoyl)-sn-glycero-3-phosphocholine + H2O = 1-(9Z-octadecenoyl)-sn-glycero-3-phosphate + choline + H(+). The enzyme catalyses N,1-dihexadecanoyl-sn-glycero-3-phosphoethanolamine + H2O = N-hexadecanoylethanolamine + 1-hexadecanoyl-sn-glycero-3-phosphate + H(+). It catalyses the reaction 1-O-(1Z-octadecenyl)-sn-glycero-3-phospho-(N-5Z,8Z,11Z,14Z-eicosatetraenoyl)-ethanolamine + H2O = 1-O-(1Z-octadecenyl)-sn-glycero-3-phosphate + N-(5Z,8Z,11Z,14Z-eicosatetraenoyl)-ethanolamine + H(+). The catalysed reaction is 1-O-(1Z-octadecenyl)-sn-glycero-3-phospho-(N-9Z-octadecenoyl)-ethanolamine + H2O = 1-O-(1Z-octadecenyl)-sn-glycero-3-phosphate + N-(9Z-octadecenoyl) ethanolamine + H(+). With respect to regulation, lysophospholipase D activity is increased by magnesium and manganese and inhibited by calcium in a concentration dependent manner. Loss of lysophospholipase D activity by addition of EDTA. Its function is as follows. Hydrolyzes lysoglycerophospholipids to produce lysophosphatidic acid (LPA) and the corresponding amines. Shows a preference for 1-O-alkyl-sn-glycero-3-phosphocholine (lyso-PAF), lysophosphatidylethanolamine (lyso-PE) and lysophosphatidylcholine (lyso-PC). May be involved in bioactive N-acylethanolamine biosynthesis from both N-acyl-lysoplasmenylethanolamin (N-acyl-lysoPlsEt) and N-acyl-lysophosphatidylethanolamin (N-acyl-lysoPE). In addition, hydrolyzes glycerophospho-N-acylethanolamine to N-acylethanolamine. Does not display glycerophosphodiester phosphodiesterase activity, since it cannot hydrolyze either glycerophosphoinositol or glycerophosphocholine. The sequence is that of Lysophospholipase D GDPD1 from Homo sapiens (Human).